We begin with the raw amino-acid sequence, 140 residues long: Endoribonuclease YbeY (140 aa).

Zn(2+)-binding residues include His99, His103, and His109.

The protein belongs to the endoribonuclease YbeY family. Requires Zn(2+) as cofactor.

It localises to the cytoplasm. In terms of biological role, single strand-specific metallo-endoribonuclease involved in late-stage 70S ribosome quality control and in maturation of the 3' terminus of the 16S rRNA. In Wolinella succinogenes (strain ATCC 29543 / DSM 1740 / CCUG 13145 / JCM 31913 / LMG 7466 / NCTC 11488 / FDC 602W) (Vibrio succinogenes), this protein is Endoribonuclease YbeY.